The following is a 378-amino-acid chain: UPF0284 protein MK0224 (378 aa).

The protein belongs to the UPF0284 family.

This chain is UPF0284 protein MK0224, found in Methanopyrus kandleri (strain AV19 / DSM 6324 / JCM 9639 / NBRC 100938).